We begin with the raw amino-acid sequence, 871 residues long: Espin (871 aa).

ANK repeat units follow at residues 1 to 31, 35 to 66, 69 to 99, 103 to 132, 137 to 167, 171 to 201, 205 to 235, 239 to 268, and 271 to 300; these read MALE…GPSL, LDAL…AVSR, NGAT…RVQE, SGAT…ANSA, TGAL…GVNA, NGAT…DPHL, DGMT…SFSE, DGAT…EISQ, and WGGT…GLDV. Phosphoserine occurs at positions 338 and 342. Disordered regions lie at residues 349-400, 416-469, 493-750, and 819-850; these read QLDS…RGIP, PEKS…VGLH, KVEL…APGV, and EREQ…TLGY. Residues 352–365 show a composition bias toward polar residues; that stretch reads SGMSSPNTTMSVQP. The span at 377–395 shows a compositional bias: low complexity; sequence FSNYDSCSSSHSSSKGQRS. The span at 428 to 465 shows a compositional bias: pro residues; sequence PSPPPPPPPPPPSFPPPPPPTGTQPPPPPPGYPAPNPP. Residues serine 517, serine 524, and serine 556 each carry the phosphoserine modification. The segment covering 522 to 548 has biased composition (basic and acidic residues); sequence QDSELLHRQELLRHSTGLRRQDSDRKQ. A compositionally biased stretch (pro residues) spans 606 to 629; the sequence is LPPPPPPPPLPEALSSPPPAPPLP. Polar residues-rich tracts occupy residues 659 to 670 and 685 to 707; these read KSFNMMSPTGDN and PTPQ…SQPE. A Phosphoserine modification is found at serine 665. Positions 669-686 constitute a WH2 domain; sequence DNSELLAEIKAGKSLKPT. 3 positions are modified to phosphoserine: serine 704, serine 708, and serine 714. A coiled-coil region spans residues 772–848; that stretch reads KRQVMVRKLQ…KEQSEKLRTL (77 aa).

Monomer. Binds F-actin in a Ca(2+)-resistant fashion. Interacts (via N-terminus) with BAIAP2 (via SH3-domain). Interacts with PFN2. Interacts with MYO3A (via C-terminus). Interacts with MYO3B (via C-terminus). In terms of tissue distribution, expressed at high concentration in the microvillar parallel actin bundle (PAB) of hair cells stereocilia in the cochlea and vestibular system. Detected also at high levels of a number of other sensory cell types, including taste receptor cells, solitary chemoreceptor cells, vomeronasal sensory neurons and Merkel cells. Isoforms 2, 3, 4 and 5 are expressed in Purkinje cells dendritic spines. Expressed in utricle hair bundles (at protein level).

It localises to the cytoplasm. The protein resides in the cytoskeleton. Its subcellular location is the cell projection. The protein localises to the stereocilium. It is found in the microvillus. It localises to the cell junction. The protein resides in the dendritic spine. Multifunctional actin-bundling protein. Plays a major role in regulating the organization, dimension, dynamics and signaling capacities of the actin filament-rich microvilli in the mechanosensory and chemosensory cells. Required for the assembly and stabilization of the stereociliary parallel actin bundles. Plays a crucial role in the formation and maintenance of inner ear hair cell stereocilia. Involved in the elongation of actin in stereocilia. In extrastriolar hair cells, required for targeting MYO3B to stereocilia tips, and for regulation of stereocilia diameter and staircase formation. This chain is Espin (Espn), found in Mus musculus (Mouse).